Here is a 387-residue protein sequence, read N- to C-terminus: Probable inactive shikimate kinase like 2, chloroplastic (387 aa).

The transit peptide at 1 to 71 (MAAFASGLAI…FNSFSCNCLS (71 aa)) directs the protein to the chloroplast. The segment at 368–387 (NIKPPGWDPSSDTGPHPQFT) is disordered.

The protein belongs to the shikimate kinase family.

The protein resides in the plastid. The protein localises to the chloroplast. This is Probable inactive shikimate kinase like 2, chloroplastic (SKL2) from Arabidopsis thaliana (Mouse-ear cress).